Here is a 418-residue protein sequence, read N- to C-terminus: Tyrosine--tRNA ligase (418 aa).

An L-tyrosine-binding site is contributed by tyrosine 34. Residues proline 39–histidine 48 carry the 'HIGH' region motif. L-tyrosine is bound by residues tyrosine 169 and glutamine 173. The 'KMSKS' region motif lies at lysine 229 to serine 233. Lysine 232 contacts ATP. Residues leucine 352–tyrosine 418 enclose the S4 RNA-binding domain.

This sequence belongs to the class-I aminoacyl-tRNA synthetase family. TyrS type 1 subfamily. In terms of assembly, homodimer.

It is found in the cytoplasm. The catalysed reaction is tRNA(Tyr) + L-tyrosine + ATP = L-tyrosyl-tRNA(Tyr) + AMP + diphosphate + H(+). In terms of biological role, catalyzes the attachment of tyrosine to tRNA(Tyr) in a two-step reaction: tyrosine is first activated by ATP to form Tyr-AMP and then transferred to the acceptor end of tRNA(Tyr). This is Tyrosine--tRNA ligase from Streptococcus gordonii (strain Challis / ATCC 35105 / BCRC 15272 / CH1 / DL1 / V288).